Here is a 27-residue protein sequence, read N- to C-terminus: Conotoxin flf14a (27 aa).

Cystine bridges form between C6–C26 and C10–C22.

Expressed by the venom duct.

It is found in the secreted. The sequence is that of Conotoxin flf14a from Conus anabathrum floridanus (Florida cone).